A 474-amino-acid chain; its full sequence is Homocitrate synthase, mitochondrial (474 aa).

One can recognise a Pyruvate carboxyltransferase domain in the interval 67 to 320 (FQIIESTLRE…KSKYKLEKLK (254 aa)). Residue Arg75 participates in 2-oxoglutarate binding. Position 76 (Glu76) interacts with Mg(2+). Residues His135, Arg195, and Thr229 each coordinate 2-oxoglutarate. The Mg(2+) site is built by His256 and His258. His353 (proton acceptor) is an active-site residue.

This sequence belongs to the alpha-IPM synthase/homocitrate synthase family. Homocitrate synthase LYS20/LYS21 subfamily. Mg(2+) serves as cofactor. It depends on Mn(2+) as a cofactor.

The protein localises to the mitochondrion. It catalyses the reaction acetyl-CoA + 2-oxoglutarate + H2O = (2R)-homocitrate + CoA + H(+). It functions in the pathway amino-acid biosynthesis; L-lysine biosynthesis via AAA pathway; L-alpha-aminoadipate from 2-oxoglutarate: step 1/5. In terms of biological role, catalyzes the aldol-type condensation of 2-oxoglutarate with acetyl-CoA to yield homocitrate. Carries out the first step of the alpha-aminoadipate (AAA) lysine biosynthesis pathway. This is Homocitrate synthase, mitochondrial (lys1) from Penicillium rubens (strain ATCC 28089 / DSM 1075 / NRRL 1951 / Wisconsin 54-1255) (Penicillium chrysogenum).